Reading from the N-terminus, the 280-residue chain is Large ribosomal subunit protein uL2 (280 aa).

Residues 215 to 280 (GRRPHVRGSA…IQRANDKKEK (66 aa)) are disordered.

This sequence belongs to the universal ribosomal protein uL2 family. As to quaternary structure, part of the 50S ribosomal subunit. Forms a bridge to the 30S subunit in the 70S ribosome.

One of the primary rRNA binding proteins. Required for association of the 30S and 50S subunits to form the 70S ribosome, for tRNA binding and peptide bond formation. It has been suggested to have peptidyltransferase activity; this is somewhat controversial. Makes several contacts with the 16S rRNA in the 70S ribosome. The chain is Large ribosomal subunit protein uL2 from Dictyoglomus thermophilum (strain ATCC 35947 / DSM 3960 / H-6-12).